Reading from the N-terminus, the 351-residue chain is MTIKVLVVDDSALIRNLLGKMIEADSELSLVGMAADAYMAKDMVNQHRPDVITLDIEMPKVDGLTFLDRLMKARPTAVVMISSLTEEGADATFNALALGAVDFIPKPKLDSPQDFNEYQDLILEKIKSAAHAKLKTQRAAPAVVVQPSHKPALSNRVINTQLVAIGASTGGTEAILSLLQQFPAVMPPIVITQHMPPGFTRTFAERLNKLTRLNVKQAEDGERLLPCYVYIAPGDQHLEVIKVGGSFKTRLTQGDKVSGHRPSVDVLFNSVAECAGANTTAAILTGMGKDGADGMALIDEQGGKTFAQGEQSCVVFGMPREAIKRGVIHHVVELPQLADKMLNYLASLKRD.

The Response regulatory domain occupies 4–121; it reads KVLVVDDSAL…PQDFNEYQDL (118 aa). The residue at position 55 (Asp-55) is a 4-aspartylphosphate. The 193-residue stretch at 156–348 folds into the CheB-type methylesterase domain; sequence RVINTQLVAI…DKMLNYLASL (193 aa). Catalysis depends on residues Ser-168, His-194, and Asp-290.

The protein belongs to the CheB family. In terms of processing, phosphorylated by CheA. Phosphorylation of the N-terminal regulatory domain activates the methylesterase activity.

Its subcellular location is the cytoplasm. It catalyses the reaction [protein]-L-glutamate 5-O-methyl ester + H2O = L-glutamyl-[protein] + methanol + H(+). The catalysed reaction is L-glutaminyl-[protein] + H2O = L-glutamyl-[protein] + NH4(+). In terms of biological role, involved in chemotaxis. Part of a chemotaxis signal transduction system that modulates chemotaxis in response to various stimuli. Catalyzes the demethylation of specific methylglutamate residues introduced into the chemoreceptors (methyl-accepting chemotaxis proteins or MCP) by CheR. Also mediates the irreversible deamidation of specific glutamine residues to glutamic acid. The polypeptide is Protein-glutamate methylesterase/protein-glutamine glutaminase 2 (Shewanella sp. (strain MR-7)).